The following is a 212-amino-acid chain: Ras-related protein Rab-15 (212 aa).

Positions 17, 18, 19, 20, 21, 22, 23, 35, 39, and 40 each coordinate GTP. Threonine 22 contacts Mg(2+). 2 short sequence motifs (switch) span residues 31 to 45 and 63 to 80; these read NEFHSSHISTIGVDF and DTAGQERYQTITKQYYRR. Positions 40 and 63 each coordinate Mg(2+). Residues glycine 66, asparagine 121, lysine 122, aspartate 124, serine 151, and alanine 152 each coordinate GTP. A disordered region spans residues 193 to 212; sequence LEEEEGKPEGPANSSKTCWC. S-geranylgeranyl cysteine attachment occurs at residues cysteine 210 and cysteine 212. Cysteine 212 carries the post-translational modification Cysteine methyl ester.

This sequence belongs to the small GTPase superfamily. Rab family. The GTP bound form of RAB15 interacts with REP15. Interacts (GTP-bound form) with MICAL1, MICAL3, MICALCL, EHBP1 and EHBP1L1. The cofactor is Mg(2+).

The protein resides in the cell membrane. The enzyme catalyses GTP + H2O = GDP + phosphate + H(+). Its activity is regulated as follows. Regulated by guanine nucleotide exchange factors (GEFs) which promote the exchange of bound GDP for free GTP. Regulated by GTPase activating proteins (GAPs) which increase the GTP hydrolysis activity. Inhibited by GDP dissociation inhibitors (GDIs). Functionally, the small GTPases Rab are key regulators of intracellular membrane trafficking, from the formation of transport vesicles to their fusion with membranes. Rabs cycle between an inactive GDP-bound form and an active GTP-bound form that is able to recruit to membranes different sets of downstream effectors directly responsible for vesicle formation, movement, tethering and fusion. RAB15 may act in concert with RAB3A in regulating aspects of synaptic vesicle membrane flow within the nerve terminal. This chain is Ras-related protein Rab-15, found in Homo sapiens (Human).